The primary structure comprises 1135 residues: Exportin-6-A (1135 aa).

The 67-residue stretch at 31–97 (IESLLNNFAQ…RNSLPKLLLS (67 aa)) folds into the Importin N-terminal domain.

The protein belongs to the exportin family. Expressed during meiotic maturation 2 hours after germinal vesicle break down (GVBD) and in unfertilized and fertilized eggs, but not in oocytes (at protein level). Expressed in somatic cells, in oocytes, during meiotic maturation and in unfertilized and fertilized eggs.

Its subcellular location is the nucleus. It is found in the cytoplasm. Its function is as follows. Mediates the nuclear export of actin and profilin-actin complexes in somatic cells. Oocyte nuclei lack active actin export. This chain is Exportin-6-A (xpo6-a), found in Xenopus laevis (African clawed frog).